The following is a 277-amino-acid chain: GPALPP motifs-containing protein 1 (277 aa).

The tract at residues 1–240 (MARDLIGPAL…VWTDTPADRE (240 aa)) is disordered. A2 is modified (N-acetylalanine). Residues 7–12 (GPALPP) carry the GPALPP motif 1 motif. At S28 the chain carries Phosphoserine. Positions 32–37 (GPALPP) match the GPALPP motif 2 motif. 2 stretches are compositionally biased toward acidic residues: residues 60-69 (GNQESEEDDT) and 81-90 (DDDDDDDDEG). Positions 93 to 98 (GPALPP) match the GPALPP motif 3 motif. Residue S106 is modified to Phosphoserine. The span at 108–117 (PRPMIGPALP) shows a compositional bias: pro residues. The GPALPP motif 4 motif lies at 113–118 (GPALPP). S138 and S143 each carry phosphoserine. T147 carries the post-translational modification Phosphothreonine. Phosphoserine is present on residues S149 and S150. A compositionally biased stretch (basic and acidic residues) spans 172–196 (EFEKRAQRMKEKLTKGDDDSSKPIT).

This Bos taurus (Bovine) protein is GPALPP motifs-containing protein 1 (GPALPP1).